Consider the following 306-residue polypeptide: MKVLWAVLVVTLLAGCQADVEPALEVGEPAPEVREPAMWQSGQPWELALGRFWDYLRWVQTLSDQVQEELLSSQVTQELTVLMEDTMKEVKAYKSELEQELGPMAEDTKARLSKELQAAQARLGADMEEVRNRLTQYRSEVQTMLGQSAEELRARLASHLRKLRKRLLRDAEDLQKRLAVYKAGAQEGAERGVSAIRERLGSLVEQGRLRAAQTSQPLRERAQAWGERLRGRLEEVGGQARDRLDVVREQMEEVRAKVEEQAEAFQARLKGWFEPVVEDMRRQWAELIEKVQVAVGASTPAPSEKH.

A signal peptide spans 1-18; the sequence is MKVLWAVLVVTLLAGCQA. 8 repeat units span residues 81–102, 103–124, 125–146, 147–168, 169–190, 191–212, 213–230, and 231–252. The segment at 81-252 is 8 X 22 AA approximate tandem repeats; sequence VLMEDTMKEV…RLDVVREQME (172 aa). Methionine 144 carries the methionine sulfoxide modification. Position 148 is a phosphoserine (serine 148). The tract at residues 159-169 is LDL and other lipoprotein receptors binding; the sequence is HLRKLRKRLLR. 163 to 166 lines the heparin pocket; the sequence is LRKR. The interval 211-280 is lipid-binding and lipoprotein association; the sequence is AAQTSQPLRE…GWFEPVVEDM (70 aa). 226–233 is a binding site for heparin; sequence GERLRGRL. A specificity for association with VLDL region spans residues 268 to 280; it reads RLKGWFEPVVEDM.

The protein belongs to the apolipoprotein A1/A4/E family. As to quaternary structure, homotetramer. May interact with ABCA1; functionally associated with ABCA1 in the biogenesis of HDLs. May interact with APP/A4 amyloid-beta peptide; the interaction is extremely stable in vitro but its physiological significance is unclear. May interact with MAPT. May interact with MAP2. In the cerebrospinal fluid, interacts with secreted SORL1. Interacts with PMEL; this allows the loading of PMEL luminal fragment on ILVs to induce fibril nucleation. In terms of processing, APOE exists as multiple glycosylated and sialylated glycoforms within cells and in plasma. The extent of glycosylation and sialylation are tissue and context specific. Glycated in plasma VLDL. Post-translationally, phosphorylated by FAM20C in the extracellular medium.

The protein localises to the secreted. It is found in the extracellular space. The protein resides in the extracellular matrix. Its subcellular location is the extracellular vesicle. It localises to the endosome. The protein localises to the multivesicular body. Functionally, APOE is an apolipoprotein, a protein associating with lipid particles, that mainly functions in lipoprotein-mediated lipid transport between organs via the plasma and interstitial fluids. APOE is a core component of plasma lipoproteins and is involved in their production, conversion and clearance. Apolipoproteins are amphipathic molecules that interact both with lipids of the lipoprotein particle core and the aqueous environment of the plasma. As such, APOE associates with chylomicrons, chylomicron remnants, very low density lipoproteins (VLDL) and intermediate density lipoproteins (IDL) but shows a preferential binding to high-density lipoproteins (HDL). It also binds a wide range of cellular receptors including the LDL receptor/LDLR, the LDL receptor-related proteins LRP1, LRP2 and LRP8 and the very low-density lipoprotein receptor/VLDLR that mediate the cellular uptake of the APOE-containing lipoprotein particles. Finally, APOE also has a heparin-binding activity and binds heparan-sulfate proteoglycans on the surface of cells, a property that supports the capture and the receptor-mediated uptake of APOE-containing lipoproteins by cells. A main function of APOE is to mediate lipoprotein clearance through the uptake of chylomicrons, VLDLs, and HDLs by hepatocytes. APOE is also involved in the biosynthesis by the liver of VLDLs as well as their uptake by peripheral tissues ensuring the delivery of triglycerides and energy storage in muscle, heart and adipose tissues. By participating in the lipoprotein-mediated distribution of lipids among tissues, APOE plays a critical role in plasma and tissues lipid homeostasis. APOE is also involved in two steps of reverse cholesterol transport, the HDLs-mediated transport of cholesterol from peripheral tissues to the liver, and thereby plays an important role in cholesterol homeostasis. First, it is functionally associated with ABCA1 in the biogenesis of HDLs in tissues. Second, it is enriched in circulating HDLs and mediates their uptake by hepatocytes. APOE also plays an important role in lipid transport in the central nervous system, regulating neuron survival and sprouting. This Hystrix brachyura (Malayan porcupine) protein is Apolipoprotein E (APOE).